Here is a 103-residue protein sequence, read N- to C-terminus: Large ribosomal subunit protein uL24 (103 aa).

Belongs to the universal ribosomal protein uL24 family. As to quaternary structure, part of the 50S ribosomal subunit.

One of two assembly initiator proteins, it binds directly to the 5'-end of the 23S rRNA, where it nucleates assembly of the 50S subunit. In terms of biological role, one of the proteins that surrounds the polypeptide exit tunnel on the outside of the subunit. The polypeptide is Large ribosomal subunit protein uL24 (Alkaliphilus metalliredigens (strain QYMF)).